The primary structure comprises 319 residues: Pyrroline-5-carboxylate reductase 1, mitochondrial (319 aa).

S2 is subject to N-acetylserine. NADP(+) is bound by residues 6–11 and S34; that span reads IGAGQL. NADPH contacts are provided by A8, Q10, L11, S34, D36, N56, V70, K71, and A97. Residues N56, 69 to 72, and 95 to 97 each bind NADP(+); these read AVKP and CAA. E164 lines the L-proline pocket. Residue N230 participates in NADPH binding. L-proline is bound by residues A237 and T238. S278 and S301 each carry phosphoserine. Residues 294–319 are disordered; the sequence is SPAGTALSPSGHTKLLPRSLAPAGKD.

The protein belongs to the pyrroline-5-carboxylate reductase family. Homodecamer; composed of 5 homodimers. Interacts with LTO1.

The protein resides in the mitochondrion. The catalysed reaction is L-proline + NADP(+) = (S)-1-pyrroline-5-carboxylate + NADPH + 2 H(+). It catalyses the reaction L-proline + NAD(+) = (S)-1-pyrroline-5-carboxylate + NADH + 2 H(+). It functions in the pathway amino-acid biosynthesis; L-proline biosynthesis; L-proline from L-glutamate 5-semialdehyde: step 1/1. With respect to regulation, subject to competitive inhibition by the reaction product proline. Subject to competitive inhibition by stearoyl coenzyme A. In terms of biological role, oxidoreductase that catalyzes the last step in proline biosynthesis, which corresponds to the reduction of pyrroline-5-carboxylate to L-proline using NAD(P)H. At physiologic concentrations, has higher specific activity in the presence of NADH. Involved in the cellular response to oxidative stress. The polypeptide is Pyrroline-5-carboxylate reductase 1, mitochondrial (Homo sapiens (Human)).